The following is a 239-amino-acid chain: Pyridoxine 5'-phosphate synthase (239 aa).

Residue Asn-7 participates in 3-amino-2-oxopropyl phosphate binding. 9–10 (DH) contacts 1-deoxy-D-xylulose 5-phosphate. Position 18 (Arg-18) interacts with 3-amino-2-oxopropyl phosphate. The active-site Proton acceptor is His-43. Residues Arg-45 and His-50 each coordinate 1-deoxy-D-xylulose 5-phosphate. The Proton acceptor role is filled by Glu-70. Thr-100 serves as a coordination point for 1-deoxy-D-xylulose 5-phosphate. Residue His-191 is the Proton donor of the active site. 3-amino-2-oxopropyl phosphate is bound by residues Gly-192 and 213–214 (GH).

This sequence belongs to the PNP synthase family. Homooctamer; tetramer of dimers.

Its subcellular location is the cytoplasm. The catalysed reaction is 3-amino-2-oxopropyl phosphate + 1-deoxy-D-xylulose 5-phosphate = pyridoxine 5'-phosphate + phosphate + 2 H2O + H(+). It participates in cofactor biosynthesis; pyridoxine 5'-phosphate biosynthesis; pyridoxine 5'-phosphate from D-erythrose 4-phosphate: step 5/5. Functionally, catalyzes the complicated ring closure reaction between the two acyclic compounds 1-deoxy-D-xylulose-5-phosphate (DXP) and 3-amino-2-oxopropyl phosphate (1-amino-acetone-3-phosphate or AAP) to form pyridoxine 5'-phosphate (PNP) and inorganic phosphate. The polypeptide is Pyridoxine 5'-phosphate synthase (Geotalea daltonii (strain DSM 22248 / JCM 15807 / FRC-32) (Geobacter daltonii)).